The primary structure comprises 172 residues: Early nodulin-like protein 17 (172 aa).

Residues 1 to 26 (MARFTVLITAVVLAFLMAAPMPGVTA) form the signal peptide. Residues 27 to 127 (KKYTVGENKF…GMKLSVKVEK (101 aa)) form the Phytocyanin domain. N-linked (GlcNAc...) asparagine glycosylation is found at asparagine 42, asparagine 73, asparagine 88, and asparagine 101. Cysteine 80 and cysteine 115 are disulfide-bonded. Residue glycine 141 is the site of GPI-anchor amidated glycine attachment. Residues 142–172 (SVSMVTGLAQFMIPVSLFAFPAMWDVISRMW) constitute a propeptide, removed in mature form.

This sequence belongs to the early nodulin-like (ENODL) family.

It localises to the cell membrane. Its function is as follows. May act as a carbohydrate transporter. The chain is Early nodulin-like protein 17 from Arabidopsis thaliana (Mouse-ear cress).